Reading from the N-terminus, the 531-residue chain is DNA damage-binding protein cmr1 (531 aa).

Disordered regions lie at residues 37 to 83 and 218 to 264; these read GIFP…RGIA and DASQ…MHIH. Residues 53-64 are compositionally biased toward basic residues; the sequence is KPKKKPAPKKIK. The WD 1 repeat unit spans residues 186-227; that stretch reads VTPERIYTMTFHPSEAKPLIFAGDKMGNLGVLDASQERPVSS. Over residues 233–245 the composition is skewed to acidic residues; it reads GDEEEQEDDDDPD. WD repeat units lie at residues 253–293, 300–340, 345–385, 392–431, 454–497, and 500–531; these read PHTR…SVET, SDDV…RTAV, LSEK…HDDP, LSRLSVSHAAFNSAGQVATSSYDDSLKIYDFGAKGIASWE, GRWV…LAQL, and DGITAVPAVAVFHRSKNWIAGGTASGKICLWM.

It belongs to the WD repeat DDB2/WDR76 family.

Functionally, DNA-binding protein that binds to both single- and double-stranded DNA. Binds preferentially to UV-damaged DNA. May be involved in DNA-metabolic processes. This Aspergillus clavatus (strain ATCC 1007 / CBS 513.65 / DSM 816 / NCTC 3887 / NRRL 1 / QM 1276 / 107) protein is DNA damage-binding protein cmr1.